The following is a 242-amino-acid chain: uncharacterized protein (242 aa).

2 helical membrane passes run 4–24 (NYQVSLIFSVIYVVTNSYYVV) and 34–54 (LLFGSFYLTMEVFQTLQWLFG). N-linked (GlcNAc...) asparagine; by host glycosylation occurs at N73. Helical transmembrane passes span 74–94 (YTIVAFILIWLQPILFSVIGY), 106–126 (VLTVLNCFVFFYGLKLLYGGF), and 162–182 (LDVFPNHLTYIILCIISFVMY). An N-linked (GlcNAc...) asparagine; by host glycan is attached at N185. Helical transmembrane passes span 189 to 209 (VIGLGWLLSLIVTKLLLAPTL) and 217 to 237 (CLLSIIANLLIVAYVHISTGI).

It localises to the membrane. This is an uncharacterized protein from Acanthamoeba polyphaga mimivirus (APMV).